We begin with the raw amino-acid sequence, 334 residues long: Methionine adenosyltransferase 2 subunit beta (334 aa).

NADP(+) contacts are provided by residues 37–40 (TGLL), 60–62 (FRR), 71–72 (NL), C93, R97, Y159, and L185. Phosphothreonine is present on T309. Positions 319 to 334 (LWPFLIDKRWRQTVFH) are required for interaction with MAT2A.

This sequence belongs to the dTDP-4-dehydrorhamnose reductase family. MAT2B subfamily. As to quaternary structure, heterotrimer; composed of a catalytic MAT2A homodimer that binds one regulatory MAT2B chain. Heterohexamer; composed of a central, catalytic MAT2A homotetramer flanked on either side by a regulatory MAT2B chain. NADP binding increases the affinity for MAT2A.

It participates in amino-acid biosynthesis; S-adenosyl-L-methionine biosynthesis; S-adenosyl-L-methionine from L-methionine: step 1/1. Functionally, regulatory subunit of S-adenosylmethionine synthetase 2, an enzyme that catalyzes the formation of S-adenosylmethionine from methionine and ATP. Regulates MAT2A catalytic activity by changing its kinetic properties, increasing its affinity for L-methionine. Can bind NADP (in vitro). In Mus musculus (Mouse), this protein is Methionine adenosyltransferase 2 subunit beta (Mat2b).